The chain runs to 349 residues: MKAVTVIPSVPESLRLRDVDKPKPNHGQVLLKPIRVGICGTDKEIIEGKYGKAPPGSQYLILGHEALAVVEELGDGVDNVAVGDVVVPTVRRPLDCNLPVDYCPMGHYVEHGIWGLHGHAAEYSVTDAKYLVKVPKELIDVAVLTEPLSVVEKGIDVALSVGGSRFEWRPRSALILGAGPIGLLSTMVLRLMGLLTTTVATRPPDSLKARLVRELGGVYVDSALSSIEGVFDLVVEATGSPQVMVDGLRHLAPNGVMVLLGVYPPGGVINDLGNVLTDSVLNNKVLVGSVNAGVKHFELGLRHMAEAKGRFGDWLSRLITKRATLDNYQEAYSWTHDDIKTVLEINPLN.

Cys-39 provides a ligand contact to Zn(2+). Thr-41 is a binding site for substrate. Zn(2+)-binding residues include His-64 and Glu-65. Residues Glu-110 and Glu-146 each contribute to the substrate site. Position 146 (Glu-146) interacts with Zn(2+). NADP(+)-binding positions include 178-181 (AGPI), 260-262 (LGV), and 289-291 (SVN). Position 291 (Asn-291) interacts with substrate.

It belongs to the zinc-containing alcohol dehydrogenase family. Glucose 1-dehydrogenase subfamily. Zn(2+) is required as a cofactor.

The catalysed reaction is D-glucose + NAD(+) = D-glucono-1,5-lactone + NADH + H(+). It carries out the reaction D-glucose + NADP(+) = D-glucono-1,5-lactone + NADPH + H(+). In terms of biological role, catalyzes the NAD(P)(+)-dependent oxidation of D-glucose to D-gluconate via gluconolactone. Can utilize both NAD(+) and NADP(+) as electron acceptor. Is involved in the degradation of glucose through a non-phosphorylative variant of the Entner-Doudoroff pathway. The protein is Glucose 1-dehydrogenase 1 of Caldivirga maquilingensis (strain ATCC 700844 / DSM 13496 / JCM 10307 / IC-167).